Here is a 266-residue protein sequence, read N- to C-terminus: Derlin-1 (266 aa).

Over 1–20 (MSSPGEFYNSLPPITKAYGT) the chain is Cytoplasmic. The chain crosses the membrane as a helical span at residues 21–41 (LCFFTTVATQLGLVAPVHIAL). Over 42-55 (IPELVLKQFQIWRL) the chain is Lumenal. Residues 56 to 76 (ITNLFFLGGFSINFGIRLLMI) form a helical membrane-spanning segment. Over 77–94 (ARYGVQLEKGPFERRTAD) the chain is Cytoplasmic. The helical transmembrane segment at 95 to 115 (FLWMMIFGSFTLLVLSVIPFF) threads the bilayer. The Lumenal portion of the chain corresponds to 116-156 (WTPFLGVSLVFMLLYLWSREFPNANISLYGLVTLKAFYLPW). A helical membrane pass occupies residues 157–177 (AMLALDVIFGSPIMPDLLGII). The Cytoplasmic portion of the chain corresponds to 178–266 (AGHLYYFLTV…FRGRSYRLTD (89 aa)). A disordered region spans residues 235–266 (GGVGGGGAYSSARAPPESSNTAFRGRSYRLTD).

The protein belongs to the derlin family.

Its subcellular location is the endoplasmic reticulum membrane. In terms of biological role, may be involved in the degradation process of specific misfolded endoplasmic reticulum (ER) luminal proteins. This Arabidopsis thaliana (Mouse-ear cress) protein is Derlin-1 (DER1).